The sequence spans 133 residues: Small ribosomal subunit protein uS8 (133 aa).

This sequence belongs to the universal ribosomal protein uS8 family. As to quaternary structure, part of the 30S ribosomal subunit. Contacts proteins S5 and S12.

One of the primary rRNA binding proteins, it binds directly to 16S rRNA central domain where it helps coordinate assembly of the platform of the 30S subunit. The protein is Small ribosomal subunit protein uS8 of Chlamydia pneumoniae (Chlamydophila pneumoniae).